The sequence spans 668 residues: Threonine--tRNA ligase (668 aa).

Residues 1 to 64 (MSQAISLTFP…TDGKIEIITR (64 aa)) form the TGS domain. A catalytic region spans residues 245–553 (DHRKLGREMD…LIENFAGHMP (309 aa)). Residues Cys347, His398, and His530 each coordinate Zn(2+).

Belongs to the class-II aminoacyl-tRNA synthetase family. In terms of assembly, homodimer. The cofactor is Zn(2+).

It localises to the cytoplasm. The enzyme catalyses tRNA(Thr) + L-threonine + ATP = L-threonyl-tRNA(Thr) + AMP + diphosphate + H(+). In terms of biological role, catalyzes the attachment of threonine to tRNA(Thr) in a two-step reaction: L-threonine is first activated by ATP to form Thr-AMP and then transferred to the acceptor end of tRNA(Thr). Also edits incorrectly charged L-seryl-tRNA(Thr). This chain is Threonine--tRNA ligase, found in Rhizobium etli (strain CIAT 652).